The primary structure comprises 220 residues: Small ribosomal subunit protein uS3 (220 aa).

The KH type-2 domain occupies 38-106 (IRKYVKGRLK…RVHININEIK (69 aa)).

Belongs to the universal ribosomal protein uS3 family. In terms of assembly, part of the 30S ribosomal subunit. Forms a tight complex with proteins S10 and S14.

In terms of biological role, binds the lower part of the 30S subunit head. Binds mRNA in the 70S ribosome, positioning it for translation. The protein is Small ribosomal subunit protein uS3 of Brevibacillus brevis (strain 47 / JCM 6285 / NBRC 100599).